Reading from the N-terminus, the 249-residue chain is Enolase-phosphatase E1 (249 aa).

It belongs to the HAD-like hydrolase superfamily. MasA/MtnC family. In terms of assembly, monomer. The cofactor is Mg(2+).

The catalysed reaction is 5-methylsulfanyl-2,3-dioxopentyl phosphate + H2O = 1,2-dihydroxy-5-(methylsulfanyl)pent-1-en-3-one + phosphate. The protein operates within amino-acid biosynthesis; L-methionine biosynthesis via salvage pathway; L-methionine from S-methyl-5-thio-alpha-D-ribose 1-phosphate: step 3/6. Its pathway is amino-acid biosynthesis; L-methionine biosynthesis via salvage pathway; L-methionine from S-methyl-5-thio-alpha-D-ribose 1-phosphate: step 4/6. Functionally, bifunctional enzyme that catalyzes the enolization of 2,3-diketo-5-methylthiopentyl-1-phosphate (DK-MTP-1-P) into the intermediate 2-hydroxy-3-keto-5-methylthiopentenyl-1-phosphate (HK-MTPenyl-1-P), which is then dephosphorylated to form the acireductone 1,2-dihydroxy-3-keto-5-methylthiopentene (DHK-MTPene). The polypeptide is Enolase-phosphatase E1 (Synechococcus sp. (strain RCC307)).